Here is a 391-residue protein sequence, read N- to C-terminus: BRCA1-A complex subunit Abraxas 1 (391 aa).

The region spanning 8–156 (VRISGFVLSS…THRLEFSAFI (149 aa)) is the MPN domain. Positions 223–261 (LLAEMQKVCVEVEKSERTVEKLQEDIAQLKEAIGKQKTH) form a coiled coil. Residues 354–391 (QRLKRKRKTREVSESASESGSDTEIEMNGQSGSNSPVF) form a disordered region. Over residues 367 to 391 (ESASESGSDTEIEMNGQSGSNSPVF) the composition is skewed to polar residues. At Ser-388 the chain carries Phosphoserine. The short motif at 388–391 (SPVF) is the pSXXF motif element.

The protein belongs to the FAM175 family. Abraxas subfamily. As to quaternary structure, component of the ARISC complex. Component of the BRCA1-A complex. Homodimer. Phosphorylation of Ser-388 of the pSXXF motif by ATM or ATR constitutes a specific recognition motif for the BRCT domain of BRCA1.

Its subcellular location is the nucleus. Functionally, involved in DNA damage response and double-strand break (DSB) repair. Component of the BRCA1-A complex, acting as a central scaffold protein that assembles the various components of the complex. The BRCA1-A complex specifically recognizes 'Lys-63'-linked ubiquitinated histones H2A and H2AX at DNA lesion sites. This complex also possesses deubiquitinase activity that specifically removes 'Lys-63'-linked ubiquitin on histones H2A and H2AX. The sequence is that of BRCA1-A complex subunit Abraxas 1 from Danio rerio (Zebrafish).